The sequence spans 1409 residues: DNA-directed RNA polymerase subunit beta' (1409 aa).

C72, C74, C87, and C90 together coordinate Zn(2+). Positions 462, 464, and 466 each coordinate Mg(2+). The Zn(2+) site is built by C816, C890, C897, and C900.

The protein belongs to the RNA polymerase beta' chain family. In terms of assembly, the RNAP catalytic core consists of 2 alpha, 1 beta, 1 beta' and 1 omega subunit. When a sigma factor is associated with the core the holoenzyme is formed, which can initiate transcription. It depends on Mg(2+) as a cofactor. Requires Zn(2+) as cofactor.

It catalyses the reaction RNA(n) + a ribonucleoside 5'-triphosphate = RNA(n+1) + diphosphate. DNA-dependent RNA polymerase catalyzes the transcription of DNA into RNA using the four ribonucleoside triphosphates as substrates. The protein is DNA-directed RNA polymerase subunit beta' of Aromatoleum aromaticum (strain DSM 19018 / LMG 30748 / EbN1) (Azoarcus sp. (strain EbN1)).